A 286-amino-acid polypeptide reads, in one-letter code: Phosphoribosylaminoimidazole-succinocarboxamide synthase (286 aa).

The protein belongs to the SAICAR synthetase family.

The catalysed reaction is 5-amino-1-(5-phospho-D-ribosyl)imidazole-4-carboxylate + L-aspartate + ATP = (2S)-2-[5-amino-1-(5-phospho-beta-D-ribosyl)imidazole-4-carboxamido]succinate + ADP + phosphate + 2 H(+). The protein operates within purine metabolism; IMP biosynthesis via de novo pathway; 5-amino-1-(5-phospho-D-ribosyl)imidazole-4-carboxamide from 5-amino-1-(5-phospho-D-ribosyl)imidazole-4-carboxylate: step 1/2. This chain is Phosphoribosylaminoimidazole-succinocarboxamide synthase, found in Histophilus somni (strain 2336) (Haemophilus somnus).